We begin with the raw amino-acid sequence, 243 residues long: Pyridoxine 5'-phosphate synthase (243 aa).

Position 9 (asparagine 9) interacts with 3-amino-2-oxopropyl phosphate. 11-12 (DH) provides a ligand contact to 1-deoxy-D-xylulose 5-phosphate. Arginine 20 contacts 3-amino-2-oxopropyl phosphate. Histidine 45 acts as the Proton acceptor in catalysis. 2 residues coordinate 1-deoxy-D-xylulose 5-phosphate: arginine 47 and histidine 52. Residue glutamate 72 is the Proton acceptor of the active site. Threonine 102 lines the 1-deoxy-D-xylulose 5-phosphate pocket. Histidine 193 acts as the Proton donor in catalysis. Residues glycine 194 and 215–216 (GH) contribute to the 3-amino-2-oxopropyl phosphate site.

Belongs to the PNP synthase family. Homooctamer; tetramer of dimers.

It localises to the cytoplasm. It carries out the reaction 3-amino-2-oxopropyl phosphate + 1-deoxy-D-xylulose 5-phosphate = pyridoxine 5'-phosphate + phosphate + 2 H2O + H(+). Its pathway is cofactor biosynthesis; pyridoxine 5'-phosphate biosynthesis; pyridoxine 5'-phosphate from D-erythrose 4-phosphate: step 5/5. Catalyzes the complicated ring closure reaction between the two acyclic compounds 1-deoxy-D-xylulose-5-phosphate (DXP) and 3-amino-2-oxopropyl phosphate (1-amino-acetone-3-phosphate or AAP) to form pyridoxine 5'-phosphate (PNP) and inorganic phosphate. The sequence is that of Pyridoxine 5'-phosphate synthase from Pseudoalteromonas translucida (strain TAC 125).